Consider the following 342-residue polypeptide: MTDGIVALGGGHGLYATLSAARRLTPYVTAVVTVADDGGSSGRLRSELDVVPPGDLRMALAALASDSPHGRLWATILQHRFGGSGALAGHPIGNLMLAGLSEVLADPVAALDELGRILGVKGRVLPMCPVALQIEADVSGLEADPRMFRLIRGQVAIATTPGKVRRVRLLPTDPPATRQAVDAIMAADLVVLGPGSWFTSVIPHVLVPGLAAALRATSARRALVLNLVAEPGETAGFSVERHLHVLAQHAPGFTVHDIIIDAERVPSEREREQLRRTATMLQAEVHFADVARPGTPLHDPGKLAAVLDGVCARDVGASEPPVAATQEIPIDGGRPRGDDAWR.

The disordered stretch occupies residues 318 to 342 (SEPPVAATQEIPIDGGRPRGDDAWR). T325 is modified (phosphothreonine). Basic and acidic residues predominate over residues 333–342 (GRPRGDDAWR).

This sequence belongs to the gluconeogenesis factor family. In terms of processing, phosphorylated by PknA and/or PknB.

It localises to the cytoplasm. Its function is as follows. Required for morphogenesis under gluconeogenic growth conditions. This is Putative gluconeogenesis factor from Mycobacterium tuberculosis (strain CDC 1551 / Oshkosh).